Here is a 378-residue protein sequence, read N- to C-terminus: Spermidine/putrescine import ATP-binding protein PotA (378 aa).

The 231-residue stretch at 18-248 (VLLSGISKSF…PKNLFVAGFI (231 aa)) folds into the ABC transporter domain. An ATP-binding site is contributed by 50–57 (GPSGCGKT).

The protein belongs to the ABC transporter superfamily. Spermidine/putrescine importer (TC 3.A.1.11.1) family. In terms of assembly, the complex is composed of two ATP-binding proteins (PotA), two transmembrane proteins (PotB and PotC) and a solute-binding protein (PotD).

It is found in the cell inner membrane. It carries out the reaction ATP + H2O + polyamine-[polyamine-binding protein]Side 1 = ADP + phosphate + polyamineSide 2 + [polyamine-binding protein]Side 1.. In terms of biological role, part of the ABC transporter complex PotABCD involved in spermidine/putrescine import. Responsible for energy coupling to the transport system. In Salmonella paratyphi A (strain ATCC 9150 / SARB42), this protein is Spermidine/putrescine import ATP-binding protein PotA.